Consider the following 81-residue polypeptide: MSHAVKIYDTCIGCTQCVRACPLDVLEMVPWDGHKSGQIAASPRTEDCVGCKRCETACPTHFLSIRVYLGDETTRSMGLAY.

4Fe-4S ferredoxin-type domains are found at residues 2 to 31 (SHAV…MVPW) and 39 to 68 (IAAS…IRVY). Positions 11, 14, 17, 21, 48, 51, 54, and 58 each coordinate [4Fe-4S] cluster.

In terms of assembly, the cyanobacterial PSI reaction center is composed of one copy each of PsaA,B,C,D,E,F,I,J,K,L,M and X, and forms trimeric complexes. [4Fe-4S] cluster is required as a cofactor.

It localises to the cellular thylakoid membrane. The catalysed reaction is reduced [plastocyanin] + hnu + oxidized [2Fe-2S]-[ferredoxin] = oxidized [plastocyanin] + reduced [2Fe-2S]-[ferredoxin]. Apoprotein for the two 4Fe-4S centers FA and FB of photosystem I (PSI); essential for photochemical activity. FB is the terminal electron acceptor of PSI, donating electrons to ferredoxin. The C-terminus interacts with PsaA/B/D and helps assemble the protein into the PSI complex. Required for binding of PsaD and PsaE to PSI. PSI is a plastocyanin/cytochrome c6-ferredoxin oxidoreductase, converting photonic excitation into a charge separation, which transfers an electron from the donor P700 chlorophyll pair to the spectroscopically characterized acceptors A0, A1, FX, FA and FB in turn. This Prochlorococcus marinus (strain MIT 9313) protein is Photosystem I iron-sulfur center.